A 94-amino-acid polypeptide reads, in one-letter code: Co-chaperonin GroES (94 aa).

Belongs to the GroES chaperonin family. Heptamer of 7 subunits arranged in a ring. Interacts with the chaperonin GroEL.

It is found in the cytoplasm. Functionally, together with the chaperonin GroEL, plays an essential role in assisting protein folding. The GroEL-GroES system forms a nano-cage that allows encapsulation of the non-native substrate proteins and provides a physical environment optimized to promote and accelerate protein folding. GroES binds to the apical surface of the GroEL ring, thereby capping the opening of the GroEL channel. The polypeptide is Co-chaperonin GroES (Listeria innocua serovar 6a (strain ATCC BAA-680 / CLIP 11262)).